The following is a 321-amino-acid chain: MIQDNFFPLFPHKHLLAIKDLSVQDLNTLLDRAEANVILSNKIDKTKSILRGRTQINLFFEASTRTQSSFELAGKRLGADVISVAIGNSSVKKGETLFDTAATLNAMKPDILVFRHSSAGAAALLAQKVDCCVINAGDGAHEHPTQALLDALTIKRAKGRIEGLTVAICGDILHSRVARSNILSLNALGARVRAVAPSTLLPTEINHMSVEVFNTMKDGLKDADVIMMLRLQHERMTGSFIPSTREYFHYFGLHKENLTYAKNNCIILHPGPINRGVEIASDIADGPQSMIRTQVEMGIAVRMAVMEALLDSRLKINGEKK.

Positions 65 and 66 each coordinate carbamoyl phosphate. Lys93 contacts L-aspartate. Carbamoyl phosphate contacts are provided by Arg115, His143, and Gln146. Positions 176 and 230 each coordinate L-aspartate. Gly271 and Pro272 together coordinate carbamoyl phosphate.

It belongs to the aspartate/ornithine carbamoyltransferase superfamily. ATCase family. Heterododecamer (2C3:3R2) of six catalytic PyrB chains organized as two trimers (C3), and six regulatory PyrI chains organized as three dimers (R2).

It carries out the reaction carbamoyl phosphate + L-aspartate = N-carbamoyl-L-aspartate + phosphate + H(+). It functions in the pathway pyrimidine metabolism; UMP biosynthesis via de novo pathway; (S)-dihydroorotate from bicarbonate: step 2/3. Functionally, catalyzes the condensation of carbamoyl phosphate and aspartate to form carbamoyl aspartate and inorganic phosphate, the committed step in the de novo pyrimidine nucleotide biosynthesis pathway. This chain is Aspartate carbamoyltransferase catalytic subunit, found in Bartonella tribocorum (strain CIP 105476 / IBS 506).